A 160-amino-acid chain; its full sequence is UPF0479 membrane protein YER190C-B (160 aa).

2 helical membrane passes run 39-59 (IVFCLPFFPALFFVPVQKVLQ) and 136-156 (VPMIWLDVFQVFFVFLVISQH).

It belongs to the UPF0479 family.

The protein localises to the membrane. The sequence is that of UPF0479 membrane protein YER190C-B from Saccharomyces cerevisiae (strain ATCC 204508 / S288c) (Baker's yeast).